A 513-amino-acid chain; its full sequence is Voltage-gated potassium channel regulatory subunit KCNG1 (513 aa).

The Cytoplasmic segment spans residues 1 to 224; sequence MTLLPGDNSD…DMVERPHSGL (224 aa). Residues 184–204 are disordered; that stretch reads EEDDALDSEGRDSEGPAEGEG. The span at 191–204 shows a compositional bias: basic and acidic residues; it reads SEGRDSEGPAEGEG. The chain crosses the membrane as a helical span at residues 225-246; sequence PGKVFACLSVLFVTVTAVNLSV. The Extracellular segment spans residues 247-267; it reads STLPSLREEEEQGHCSQMCHN. The chain crosses the membrane as a helical span at residues 268–289; sequence VFIVESVCVGWFSLEFLLRLIQ. Residues 290–300 are Cytoplasmic-facing; that stretch reads APSKFAFLRSP. Residues 301–321 form a helical membrane-spanning segment; it reads LTLIDLVAILPYYITLLVDGA. Over 322–338 the chain is Extracellular; that stretch reads AAGRRKPGAGNSYLDKV. A helical; Voltage-sensor transmembrane segment spans residues 339–359; that stretch reads GLVLRVLRALRILYVMRLARH. At 360 to 374 the chain is on the cytoplasmic side; that stretch reads SLGLQTLGLTARRCT. The helical transmembrane segment at 375–396 threads the bilayer; sequence REFGLLLLFLCVAIALFAPLLY. Over 397–411 the chain is Extracellular; it reads VIENEMADSPEFTSI. Positions 412–423 form an intramembrane region, helical; the sequence is PACYWWAVITMT. The short motif at 424–429 is the Selectivity filter element; the sequence is TVGYGD. Residues 424–431 lie within the membrane without spanning it; sequence TVGYGDMV. Topologically, residues 432–438 are extracellular; sequence PRSTPGQ. Residues 439–467 traverse the membrane as a helical segment; it reads VVALSSILSGILLMAFPVTSIFHTFSRSY. Over 468 to 513 the chain is Cytoplasmic; that stretch reads LELKQEQERVMFRRAQFLIKTKSQLSVSQDSDILFGSASSDTRDNN.

It belongs to the potassium channel family. G (TC 1.A.1.2) subfamily. Kv6.1/KCNG1 sub-subfamily. Heterotetramer with KCNB1. Heterotetramer with KCNB2. In terms of tissue distribution, expressed in brain and placenta, and at much lower levels in kidney and pancreas.

The protein localises to the cell membrane. Regulatory alpha-subunit of the voltage-gated potassium (Kv) channel which, when coassembled with KCNB1 or KCNB2, can modulate their expression and their gating kinetics by acting on deactivation upon repolarization and inactivation during maintained depolarization. Potassium channel subunit that does not form functional channels by itself. In Homo sapiens (Human), this protein is Voltage-gated potassium channel regulatory subunit KCNG1.